The chain runs to 274 residues: Large ribosomal subunit protein uL2 (274 aa).

The segment at 223–274 is disordered; sequence VAMNPVDHPMGGGEGKASGGHPRSRTGLYAKGKKTRNTNKYSKNYILSRKKR.

It belongs to the universal ribosomal protein uL2 family. In terms of assembly, part of the 50S ribosomal subunit. Forms a bridge to the 30S subunit in the 70S ribosome.

Its function is as follows. One of the primary rRNA binding proteins. Required for association of the 30S and 50S subunits to form the 70S ribosome, for tRNA binding and peptide bond formation. It has been suggested to have peptidyltransferase activity; this is somewhat controversial. Makes several contacts with the 16S rRNA in the 70S ribosome. This chain is Large ribosomal subunit protein uL2, found in Amoebophilus asiaticus (strain 5a2).